The chain runs to 57 residues: Large ribosomal subunit protein bL32 (57 aa).

The interval 1–20 (MAVQQRRSSKHRRDKRRSHD) is disordered. Residues 7-18 (RSSKHRRDKRRS) show a composition bias toward basic residues.

This sequence belongs to the bacterial ribosomal protein bL32 family.

This chain is Large ribosomal subunit protein bL32 (rpmF), found in Mycoplasma genitalium (strain ATCC 33530 / DSM 19775 / NCTC 10195 / G37) (Mycoplasmoides genitalium).